We begin with the raw amino-acid sequence, 247 residues long: PF03932 family protein CutC (247 aa).

The protein belongs to the CutC family.

The protein resides in the cytoplasm. In Vibrio parahaemolyticus serotype O3:K6 (strain RIMD 2210633), this protein is PF03932 family protein CutC.